The sequence spans 698 residues: Polyribonucleotide nucleotidyltransferase (698 aa).

2 residues coordinate Mg(2+): Asp488 and Asp494. The KH domain occupies 555-614 (PRLLTIRIDPDKIRDVIGKGGATIRALTEETGTTIDISDDGKVTIASADKAAADEARRRI). Positions 624–692 (GTVYEGKVSK…RQGRIRLSMK (69 aa)) constitute an S1 motif domain.

It belongs to the polyribonucleotide nucleotidyltransferase family. Component of the RNA degradosome, which is a multiprotein complex involved in RNA processing and mRNA degradation. Mg(2+) serves as cofactor.

The protein resides in the cytoplasm. It catalyses the reaction RNA(n+1) + phosphate = RNA(n) + a ribonucleoside 5'-diphosphate. Its function is as follows. Involved in mRNA degradation. Catalyzes the phosphorolysis of single-stranded polyribonucleotides processively in the 3'- to 5'-direction. The sequence is that of Polyribonucleotide nucleotidyltransferase from Alkalilimnicola ehrlichii (strain ATCC BAA-1101 / DSM 17681 / MLHE-1).